The chain runs to 316 residues: 4-amino-5-hydroxymethyl-2-methylpyrimidine phosphate synthase (316 aa).

K66 is modified (N6-(pyridoxal phosphate)lysine). H70 is a catalytic residue. Position 118 to 121 (118 to 121 (GEFG)) interacts with pyridoxal 5'-phosphate. Positions 191 to 195 (CCCFC) match the CCCFC; essential for catalytic activity, may be the site of iron coordination motif.

It belongs to the NMT1/THI5 family. In terms of assembly, homodimer. The cofactor is Fe cation.

The enzyme catalyses N(6)-(pyridoxal phosphate)-L-lysyl-[4-amino-5-hydroxymethyl-2-methylpyrimidine phosphate synthase] + L-histidyl-[4-amino-5-hydroxymethyl-2-methylpyrimidine phosphate synthase] + 2 Fe(3+) + 4 H2O = L-lysyl-[4-amino-5-hydroxymethyl-2-methylpyrimidine phosphate synthase] + (2S)-2-amino-5-hydroxy-4-oxopentanoyl-[4-amino-5-hydroxymethyl-2-methylpyrimidine phosphate synthase] + 4-amino-2-methyl-5-(phosphooxymethyl)pyrimidine + 3-oxopropanoate + 2 Fe(2+) + 2 H(+). It functions in the pathway cofactor biosynthesis; thiamine diphosphate biosynthesis. Functionally, responsible for the formation of the pyrimidine heterocycle in the thiamine biosynthesis pathway. Catalyzes the formation of hydroxymethylpyrimidine phosphate (HMP-P) from histidine and pyridoxal phosphate (PLP). The protein uses PLP and the active site histidine to form HMP-P, generating an inactive enzyme. The enzyme can only undergo a single turnover, which suggests it is a suicide enzyme. The polypeptide is 4-amino-5-hydroxymethyl-2-methylpyrimidine phosphate synthase (Legionella pneumophila subsp. pneumophila (strain Philadelphia 1 / ATCC 33152 / DSM 7513)).